A 443-amino-acid chain; its full sequence is Trihelix transcription factor ASIL2 (443 aa).

The tract at residues M1–D82 is disordered. Residues Y38–Q48 are compositionally biased toward polar residues. Residues S64–G78 are compositionally biased toward gly residues. The Myb-like domain maps to W84 to K144. Disordered stretches follow at residues F238–W350 and R413–N443. A compositionally biased stretch (gly residues) spans G239–S249. Low complexity predominate over residues T271–G286. The Bipartite nuclear localization signal signature appears at K290–R303. Basic and acidic residues predominate over residues M333–W350. A coiled-coil region spans residues F360–R414. Residues N428–N443 are compositionally biased toward low complexity.

It is found in the nucleus. In terms of biological role, transcription regulator that may repress the maturation program during early embryogenesis. The polypeptide is Trihelix transcription factor ASIL2 (Arabidopsis thaliana (Mouse-ear cress)).